Consider the following 60-residue polypeptide: Large ribosomal subunit protein bL32 (60 aa).

The tract at residues 1-47 (MAVQQNRKTRSKRGMRRSHDALTSSTLSTDPTTGEKHRRHHVTADGF) is disordered. Positions 7–16 (RKTRSKRGMR) are enriched in basic residues.

The protein belongs to the bacterial ribosomal protein bL32 family.

The sequence is that of Large ribosomal subunit protein bL32 from Teredinibacter turnerae (strain ATCC 39867 / T7901).